Here is a 440-residue protein sequence, read N- to C-terminus: 2-phosphinomethylmalate synthase (440 aa).

Residues 39-313 enclose the Pyruvate carboxyltransferase domain; the sequence is VWLSETTHRD…GARVNLPAVN (275 aa).

This sequence belongs to the alpha-IPM synthase/homocitrate synthase family. As to quaternary structure, homodimer. It depends on Mn(2+) as a cofactor. Requires Co(2+) as cofactor.

It catalyses the reaction 3-(hydrohydroxyphosphoryl)pyruvate + acetyl-CoA + H2O = phosphinomethylmalate + CoA + H(+). It functions in the pathway secondary metabolite biosynthesis; bialaphos biosynthesis. With respect to regulation, strongly inhibited by p-chloromercuribenzoate (pCMB), iodoacetamide (IA) and EDTA. Involved in the biosynthesis of phosphinothricin tripeptide (PTT), also known as bialaphos (BA), a natural-product antibiotic and potent herbicide. Catalyzes the condensation berween phosphinopyruvic acid (PPA), an analog of oxalacetic acid, and acetyl-CoA to form R-2-phosphinomethylmalic acid (PMM). Can also act on oxaloacetate, but shows no activity when acetyl-CoA is substituted by propionyl-CoA or butyryl-CoA. This is 2-phosphinomethylmalate synthase from Streptomyces hygroscopicus.